Consider the following 657-residue polypeptide: Histidine ammonia-lyase (657 aa).

The segment at residues 253–255 (ASG) is a cross-link (5-imidazolinone (Ala-Gly)). At serine 254 the chain carries 2,3-didehydroalanine (Ser). A Phosphothreonine modification is found at threonine 396. Serine 635 is subject to Phosphoserine. Threonine 637 is modified (phosphothreonine). Serine 648 carries the phosphoserine modification.

It belongs to the PAL/histidase family. Post-translationally, contains an active site 4-methylidene-imidazol-5-one (MIO), which is formed autocatalytically by cyclization and dehydration of residues Ala-Ser-Gly. As to expression, liver and skin.

It catalyses the reaction L-histidine = trans-urocanate + NH4(+). It functions in the pathway amino-acid degradation; L-histidine degradation into L-glutamate; N-formimidoyl-L-glutamate from L-histidine: step 1/3. The protein is Histidine ammonia-lyase (Hal) of Rattus norvegicus (Rat).